A 280-amino-acid chain; its full sequence is Undecaprenyl-diphosphatase (280 aa).

Helical transmembrane passes span 1–21 (MTLLQALILAIVQGITEPFPV), 45–65 (FLPFLTMLHVGTLVALAGVFW), 90–110 (IFGLLVIATIPAVLVGWLLEH), 115–135 (VFGTPLAVAGFLILNGFLLMV), 151–171 (IATLAPKDAVIIGIWQCLALL), 226–246 (IMVQCVAGAVVAGLTALICSL), and 260–280 (LTPFGVYCVLAGLFAGAVILL).

This sequence belongs to the UppP family.

The protein resides in the cell inner membrane. The catalysed reaction is di-trans,octa-cis-undecaprenyl diphosphate + H2O = di-trans,octa-cis-undecaprenyl phosphate + phosphate + H(+). Functionally, catalyzes the dephosphorylation of undecaprenyl diphosphate (UPP). Confers resistance to bacitracin. The chain is Undecaprenyl-diphosphatase from Gluconobacter oxydans (strain 621H) (Gluconobacter suboxydans).